Consider the following 140-residue polypeptide: Gas vesicle protein O (140 aa).

The segment covering 1–14 has biased composition (basic and acidic residues); it reads MSDQGNEHANHDGI. Residues 1-61 are disordered; it reads MSDQGNEHAN…DSTIGLSDAQ (61 aa). Positions 39–56 are enriched in polar residues; the sequence is QTASDEAVSNQSPDSTIG.

Belongs to the gas vesicle GvpO family. In terms of assembly, forms homodimers, forms a GvpN-GvpO heterodimer, interacts with GvpC, GvpF, GvpI and GvpL, might interact with GvpA.

It is found in the gas vesicle. It localises to the cytoplasm. Its function is as follows. A minor component of the gas vesicle (GV), may play a role in transcription and/or RNA stability and/or in GV assembly. Gas vesicles are small, hollow, gas filled protein structures found in some microorganisms. They allow positioning of halobacteria at the optimal depth for growth in the poorly aerated shallow brine pools of their habitat. Expression of a 9.5 kb mc-vac DNA fragment containing 2 divergently transcribed regions (gvpD-gvpE-gvpF-gvpG-gvpH-gvpI-gvpJ-gvpK-gvpL-gvpM and gvpA-gvpC-gvpN-gvpO) allows H.volcanii to produce gas vesicles. The protein is Gas vesicle protein O of Haloferax mediterranei (strain ATCC 33500 / DSM 1411 / JCM 8866 / NBRC 14739 / NCIMB 2177 / R-4) (Halobacterium mediterranei).